Consider the following 139-residue polypeptide: Basic phospholipase A2 beta-bungarotoxin A2 chain (139 aa).

Residues 1-9 (AVCVSLLGA) form the signal peptide. Residues 10 to 17 (ANIPPHPF) constitute a propeptide that is removed on maturation. Ca(2+) is bound by residues Y45, G47, and G49. A disulfide bridge links C46 with C62. H65 is a catalytic residue. D66 contributes to the Ca(2+) binding site.

Belongs to the phospholipase A2 family. Group I subfamily. D49 sub-subfamily. As to quaternary structure, heterodimer; disulfide-linked. The A chains have phospholipase A2 activity and the B chains show homology with the basic protease inhibitors. Ca(2+) serves as cofactor. Expressed by the venom gland.

The protein resides in the secreted. The catalysed reaction is a 1,2-diacyl-sn-glycero-3-phosphocholine + H2O = a 1-acyl-sn-glycero-3-phosphocholine + a fatty acid + H(+). In terms of biological role, snake venom phospholipase A2 (PLA2) that shows presynaptic neurotoxicity. PLA2 catalyzes the calcium-dependent hydrolysis of the 2-acyl groups in 3-sn-phosphoglycerides. The polypeptide is Basic phospholipase A2 beta-bungarotoxin A2 chain (Bungarus candidus (Malayan krait)).